A 387-amino-acid polypeptide reads, in one-letter code: Exodeoxyribonuclease 7 large subunit (387 aa).

Belongs to the XseA family. In terms of assembly, heterooligomer composed of large and small subunits.

The protein localises to the cytoplasm. The enzyme catalyses Exonucleolytic cleavage in either 5'- to 3'- or 3'- to 5'-direction to yield nucleoside 5'-phosphates.. Bidirectionally degrades single-stranded DNA into large acid-insoluble oligonucleotides, which are then degraded further into small acid-soluble oligonucleotides. In Synechococcus sp. (strain CC9605), this protein is Exodeoxyribonuclease 7 large subunit.